Here is a 596-residue protein sequence, read N- to C-terminus: DNA polymerase kappa (596 aa).

One can recognise a UmuC domain in the interval 85–320 (CVCIDMDAYF…LPIRKVGGIG (236 aa)). The Mg(2+) site is built by D89 and D180. The active site involves E181. The UBZ4-type zinc-finger motif lies at 516–545 (TRPCPICGTDVENRLDVMNCHVDECILKVQ). Residues C519, C522, H536, and C540 each coordinate Zn(2+). A disordered region spans residues 559–584 (NKSTQKPERPSTKKRKLQEKRPKAKK). Positions 570 to 584 (TKKRKLQEKRPKAKK) are enriched in basic residues.

Belongs to the DNA polymerase type-Y family. It depends on Mg(2+) as a cofactor. The cofactor is Mn(2+).

The protein localises to the nucleus. The catalysed reaction is DNA(n) + a 2'-deoxyribonucleoside 5'-triphosphate = DNA(n+1) + diphosphate. In terms of biological role, DNA polymerase specifically involved in DNA repair. Plays an important role in translesion synthesis, where the normal high-fidelity DNA polymerases cannot proceed and DNA synthesis stalls. Depending on the context, it inserts the correct base, but causes frequent base transitions, transversions and frameshifts. Lacks 3'-5' proofreading exonuclease activity. Forms a Schiff base with 5'-deoxyribose phosphate at abasic sites, but does not have lyase activity. This is DNA polymerase kappa (polk-1) from Caenorhabditis elegans.